We begin with the raw amino-acid sequence, 377 residues long: RCC1 domain-containing protein 1 (377 aa).

An interaction with KDM8 region spans residues 1 to 172 (MAEKRHGAWF…VRQLELGAEH (172 aa)). The stretch at 6–57 (HGAWFGFGFCGFGQALGSGNSHHSVYSPEPLHASDDICQVSAGWSYTALVTR) is one RCC1 1 repeat. The residue at position 144 (Arg-144) is a (3R)-3-hydroxyarginine. 3 RCC1 repeats span residues 179–230 (AGQV…CLSE), 232–289 (GDIY…IAIQ), and 319–372 (TGEL…VYAM).

In terms of assembly, found in a complex with KDM8. Interacts (via N-terminus) with KDM8 (via N-terminus). Specifically hydroxylated (with R stereochemistry) at C-3 of ARG-141 by KDM8.

It is found in the chromosome. In terms of biological role, plays a role in transcriptional repression of satellite repeats, possibly by regulating H3K36 methylation levels in centromeric regions together with KDM8. Possibly together with KDM8, is involved in proper mitotic spindle organization and chromosome segregation. Plays a role in regulating alpha-tubulin deacetylation and cytoskeletal microtubule stability, thereby promoting cell migration and TGF-beta-induced epithelial to mesenchymal transition (EMT), potentially through the inhibition of KDM8. This chain is RCC1 domain-containing protein 1 (Rccd1), found in Mus musculus (Mouse).